The primary structure comprises 224 residues: ATP phosphoribosyltransferase (224 aa).

The protein belongs to the ATP phosphoribosyltransferase family. Short subfamily. Heteromultimer composed of HisG and HisZ subunits.

It is found in the cytoplasm. It carries out the reaction 1-(5-phospho-beta-D-ribosyl)-ATP + diphosphate = 5-phospho-alpha-D-ribose 1-diphosphate + ATP. It functions in the pathway amino-acid biosynthesis; L-histidine biosynthesis; L-histidine from 5-phospho-alpha-D-ribose 1-diphosphate: step 1/9. Catalyzes the condensation of ATP and 5-phosphoribose 1-diphosphate to form N'-(5'-phosphoribosyl)-ATP (PR-ATP). Has a crucial role in the pathway because the rate of histidine biosynthesis seems to be controlled primarily by regulation of HisG enzymatic activity. The chain is ATP phosphoribosyltransferase from Cupriavidus necator (strain ATCC 17699 / DSM 428 / KCTC 22496 / NCIMB 10442 / H16 / Stanier 337) (Ralstonia eutropha).